A 97-amino-acid polypeptide reads, in one-letter code: CRISPR-associated endoribonuclease Cas2 1 (97 aa).

Residue aspartate 12 participates in Mg(2+) binding.

Belongs to the CRISPR-associated endoribonuclease Cas2 protein family. Homodimer, forms a heterotetramer with a Cas1 homodimer. Requires Mg(2+) as cofactor.

CRISPR (clustered regularly interspaced short palindromic repeat) is an adaptive immune system that provides protection against mobile genetic elements (viruses, transposable elements and conjugative plasmids). CRISPR clusters contain sequences complementary to antecedent mobile elements and target invading nucleic acids. CRISPR clusters are transcribed and processed into CRISPR RNA (crRNA). Functions as a ssRNA-specific endoribonuclease. Involved in the integration of spacer DNA into the CRISPR cassette. The sequence is that of CRISPR-associated endoribonuclease Cas2 1 from Francisella tularensis subsp. novicida (strain U112).